The following is a 505-amino-acid chain: Cysteine--tRNA ligase (505 aa).

C33 serves as a coordination point for Zn(2+). The 'HIGH' region signature appears at 35–45 (PTVYDFAHIGN). Zn(2+) is bound by residues C229, H268, and E272. The 'KMSKS' region motif lies at 301 to 305 (KMSKS). Position 304 (K304) interacts with ATP.

The protein belongs to the class-I aminoacyl-tRNA synthetase family. As to quaternary structure, monomer. The cofactor is Zn(2+).

The protein resides in the cytoplasm. The enzyme catalyses tRNA(Cys) + L-cysteine + ATP = L-cysteinyl-tRNA(Cys) + AMP + diphosphate. The polypeptide is Cysteine--tRNA ligase (Brucella anthropi (strain ATCC 49188 / DSM 6882 / CCUG 24695 / JCM 21032 / LMG 3331 / NBRC 15819 / NCTC 12168 / Alc 37) (Ochrobactrum anthropi)).